A 365-amino-acid chain; its full sequence is Fatty acid hydroxylase vlmA (365 aa).

The interval Thr-20–Ile-41 is disordered. Residue Asn-47 is glycosylated (N-linked (GlcNAc...) asparagine). Helical transmembrane passes span Ile-62–Ile-82, Val-89–Leu-109, Leu-144–Tyr-164, and Trp-179–Tyr-199. The region spanning Leu-189–Thr-335 is the Fatty acid hydroxylase domain.

This sequence belongs to the sterol desaturase family. TMEM195 subfamily.

It localises to the membrane. The protein operates within secondary metabolite biosynthesis. Functionally, fatty acid hydroxylase; part of the gene cluster that mediates the biosynthesis of verlamelin, a lipopeptide that exhibits antifungal activity against plant pathogenic fungi. Verlamelin is a cyclic hexadepsipeptide and is bridged by ester bonding between a 5-hydroxytetradecanoic acid moiety and a carboxyl group on the terminal Val of amide-bonded tetradecanoyl-hexapeptide D-allo-Thr-D-Ala-L-Pro-L-Gln-D-Tyr-L-Val. VlmA and vlmB are altogether regarded as essential components in the biosynthesis of 5-hydroxytetradecanoic acid. VlmA catalyzes the hydroxylation at position C5 of tetradecanoic acid produced in primary metabolism, while the precise function of vlmB still remains to be solved. To be loaded onto the waiting NRPS, 5-hydroxytetradecanoic acid is activated in the form of acyladenylate by the AMP-dependent ligase vlmC. VlmS seems to accept the fatty-acyl intermediate onto the initial module to further elongate amino acid residues by the downstream modules. In addition, in the last module at its C-terminus, vlmS contains a surplus condensation (C) domain that may be involved in cyclization, the last step to form verlamelin. This Lecanicillium sp protein is Fatty acid hydroxylase vlmA.